A 559-amino-acid polypeptide reads, in one-letter code: Sesquiterpene synthase (559 aa).

Residues D312, D316, and E464 each contribute to the Mg(2+) site. A DDXXD motif motif is present at residues 312–316; that stretch reads DDIYD.

Belongs to the terpene synthase family. Tpsa subfamily. Mg(2+) is required as a cofactor. Mn(2+) serves as cofactor.

Its function is as follows. Catalyzes alpha-humulene and delta-cadinene, as well as beta-elemene, the thermal rearrangement product of germacrene A and several other bicyclic sesquiterpenes when incubated with (2E,6E)-farnesyl diphosphate. The protein is Sesquiterpene synthase of Santalum austrocaledonicum (Sandalwood).